The primary structure comprises 216 residues: FGFR1 oncogene partner 2 homolog (216 aa).

Coiled-coil stretches lie at residues 33-102 (TTTL…LIMS) and 131-185 (SKEL…ITRA). The segment at 193 to 216 (EDAAESSSHSASSVPNTDLSLRKS) is disordered. Polar residues predominate over residues 206–216 (VPNTDLSLRKS).

It belongs to the SIKE family.

The protein resides in the cytoplasm. The sequence is that of FGFR1 oncogene partner 2 homolog (fgfr1op2) from Xenopus tropicalis (Western clawed frog).